The primary structure comprises 722 residues: Homeobox-leucine zipper protein HDG11 (722 aa).

Over residues 1 to 19 (MSFVVGVGGSGSGSGGDGG) the composition is skewed to gly residues. The segment at 1-42 (MSFVVGVGGSGSGSGGDGGGSHHHDGSETDRKKKRYHRHTAQ) is disordered. The span at 20–31 (GSHHHDGSETDR) shows a compositional bias: basic and acidic residues. A DNA-binding region (homeobox) is located at residues 32 to 91 (KKKRYHRHTAQQIQRLESSFKECPHPDEKQRNQLSRELGLAPRQIKFWFQNRRTQLKAQH). Residues 81–161 (QNRRTQLKAQ…LERMSTIASK (81 aa)) are a coiled coil. The 234-residue stretch at 227 to 460 (SDMDKPIMTG…LQRMCERFAS (234 aa)) folds into the START domain.

The protein belongs to the HD-ZIP homeobox family. Class IV subfamily. As to quaternary structure, interacts with BBM. As to expression, expressed in apical meristems and young epidermal tissue including trichomes and stipules. Expressed in lateral root tips, the L1 layer of apical inflorescence meristems and early flower primordia, carpel and petal epidermis, stigma papillae, ovule primordia, nucellus and embryo.

It is found in the nucleus. Its function is as follows. Transcription factor which acts as a positive regulator of drought stress tolerance. Can transactivate CIPK3, NCED3 and ERECTA. Transactivates several cell-wall-loosening protein genes by directly binding to HD motifs in their promoters. These target genes play important roles in coordinating cell-wall extensibility with root development and growth. Transactivates CYP74A/AOS, AOC3, OPR3 and 4CLL5/OPCL1 genes by directly binding to HD motifs in their promoters. These target genes are involved in jasmonate (JA) biosynthesis, and JA signaling affects root architecture by activating auxin signaling, which promotes lateral root formation. Acts as a negative regulator of trichome branching. Required for the establishment of giant cell identity on the abaxial side of sepals. Seems to promote cell differentiation. May regulate cell differentiation and proliferation during root and shoot meristem development. This chain is Homeobox-leucine zipper protein HDG11, found in Arabidopsis thaliana (Mouse-ear cress).